The following is a 177-amino-acid chain: Small ribosomal subunit protein uS5 (177 aa).

The 64-residue stretch at Trp19–Val82 folds into the S5 DRBM domain.

It belongs to the universal ribosomal protein uS5 family. Part of the 30S ribosomal subunit. Contacts proteins S4 and S8.

With S4 and S12 plays an important role in translational accuracy. Functionally, located at the back of the 30S subunit body where it stabilizes the conformation of the head with respect to the body. This chain is Small ribosomal subunit protein uS5, found in Acaryochloris marina (strain MBIC 11017).